A 149-amino-acid polypeptide reads, in one-letter code: Altered inheritance of mitochondria protein 11 (149 aa).

Helical transmembrane passes span 29–48 (MMRF…LAIT) and 79–101 (LVLA…CWIW).

The protein belongs to the AIM11 family.

Its subcellular location is the membrane. This chain is Altered inheritance of mitochondria protein 11 (AIM11), found in Vanderwaltozyma polyspora (strain ATCC 22028 / DSM 70294 / BCRC 21397 / CBS 2163 / NBRC 10782 / NRRL Y-8283 / UCD 57-17) (Kluyveromyces polysporus).